The following is a 755-amino-acid chain: Probable ubiquitin carboxyl-terminal hydrolase creB (755 aa).

The tract at residues 1–32 (MGSFLRSLRRDVGPPTPSVGATPAKKEPPVPP) is disordered. A USP domain is found at 55-468 (FGMENYGNTC…CAYVLFYQET (414 aa)). Cys-64 acts as the Nucleophile in catalysis. 2 disordered regions span residues 119 to 146 (EKQK…DSPE) and 237 to 270 (EASK…TPNT). The span at 237–246 (EASKQPEPER) shows a compositional bias: basic and acidic residues. Positions 254–270 (ADSTELSGSSGSKTPNT) are enriched in polar residues. The Proton acceptor role is filled by His-419. The interval 495–755 (TLKQNGYPLS…LKKKSFSILS (261 aa)) is disordered. Over residues 547–560 (ESSPADPSTTASAT) the composition is skewed to low complexity. Over residues 577–648 (KKSDSHFKKE…RRHSPDDTKK (72 aa)) the composition is skewed to basic and acidic residues. The stretch at 581-630 (SHFKKERAKEEKERKANEKEKEKQRRRDQEARIREQRREDAEIRAALEAS) forms a coiled coil. Residues 654–666 (SRLKRGSKSFSHR) are compositionally biased toward basic residues. Residues 693–709 (NGASESQQQLPNGQSPG) show a composition bias toward polar residues. Over residues 718-733 (TGLDEERDTLKDPKHD) the composition is skewed to basic and acidic residues. The segment covering 734–755 (RSGHHGKWRSFSLKKKSFSILS) has biased composition (basic residues).

It belongs to the peptidase C19 family. In terms of assembly, interacts with creA, creC and qutD.

The catalysed reaction is Thiol-dependent hydrolysis of ester, thioester, amide, peptide and isopeptide bonds formed by the C-terminal Gly of ubiquitin (a 76-residue protein attached to proteins as an intracellular targeting signal).. Functionally, ubiquitin thioesterase component of the regulatory network controlling carbon source utilization through ubiquitination and deubiquitination involving creA, creB, creC, creD and acrB. Deubiquitinates the creA catabolic repressor and the quinate permease qutD. Also plays a role in response to carbon starvation and the control of extracellular proteases activity. The protein is Probable ubiquitin carboxyl-terminal hydrolase creB (creB) of Aspergillus flavus (strain ATCC 200026 / FGSC A1120 / IAM 13836 / NRRL 3357 / JCM 12722 / SRRC 167).